We begin with the raw amino-acid sequence, 29 residues long: Protein Tat (29 aa).

The tract at residues 1–29 (PSSQPRGDPTGQEEPKKKVEKKTTTDPFD) is disordered. Residues 6–8 (RGD) carry the Cell attachment site motif. Basic and acidic residues predominate over residues 13-29 (EEPKKKVEKKTTTDPFD).

The protein belongs to the lentiviruses Tat family. Interacts with host CCNT1. Associates with the P-TEFb complex composed at least of Tat, P-TEFb (CDK9 and CCNT1), TAR RNA, RNA Pol II. Recruits the HATs CREBBP, TAF1/TFIID, EP300, PCAF and GCN5L2. Interacts with host KAT5/Tip60; this interaction targets the latter to degradation. Interacts with the host deacetylase SIRT1. Interacts with host capping enzyme RNGTT; this interaction stimulates RNGTT. Binds to host KDR, and to the host integrins ITGAV/ITGB3 and ITGA5/ITGB1. Interacts with host KPNB1/importin beta-1 without previous binding to KPNA1/importin alpha-1. Interacts with EIF2AK2. Interacts with host nucleosome assembly protein NAP1L1; this interaction may be required for the transport of Tat within the nucleus, since the two proteins interact at the nuclear rim. Interacts with host C1QBP/SF2P32; this interaction involves lysine-acetylated Tat. Interacts with the host chemokine receptors CCR2, CCR3 and CXCR4. Interacts with host DPP4/CD26; this interaction may trigger an anti-proliferative effect. Interacts with host LDLR. Interacts with the host extracellular matrix metalloproteinase MMP1. Interacts with host PRMT6; this interaction mediates Tat's methylation. Interacts with, and is ubiquitinated by MDM2/Hdm2. Interacts with host PSMC3 and HTATIP2. Interacts with STAB1; this interaction may overcome SATB1-mediated repression of IL2 and IL2RA (interleukin) in T cells by binding to the same domain than HDAC1. Interacts (when acetylated) with human CDK13, thereby increasing HIV-1 mRNA splicing and promoting the production of the doubly spliced HIV-1 protein Nef. Acetylation by EP300, CREBBP, GCN5L2/GCN5 and PCAF regulates the transactivation activity of Tat. Post-translationally, phosphorylated by EIF2AK2 on serine and threonine residues adjacent to the basic region important for TAR RNA binding and function. Phosphorylation of Tat by EIF2AK2 is dependent on the prior activation of EIF2AK2 by dsRNA. In terms of processing, asymmetrical arginine methylation by host PRMT6 seems to diminish the transactivation capacity of Tat and affects the interaction with host CCNT1. Polyubiquitination by MDM2 does not target Tat to degradation, but activates its transactivation function and fosters interaction with CCNT1 and TAR RNA.

It is found in the host nucleus. It localises to the host nucleolus. The protein resides in the host cytoplasm. The protein localises to the secreted. Its function is as follows. Transcriptional activator that increases RNA Pol II processivity, thereby increasing the level of full-length viral transcripts. Recognizes a hairpin structure at the 5'-LTR of the nascent viral mRNAs referred to as the transactivation responsive RNA element (TAR) and recruits the cyclin T1-CDK9 complex (P-TEFb complex) that will in turn hyperphosphorylate the RNA polymerase II to allow efficient elongation. The CDK9 component of P-TEFb and other Tat-activated kinases hyperphosphorylate the C-terminus of RNA Pol II that becomes stabilized and much more processive. Other factors such as HTATSF1/Tat-SF1, SUPT5H/SPT5, and HTATIP2 are also important for Tat's function. Besides its effect on RNA Pol II processivity, Tat induces chromatin remodeling of proviral genes by recruiting the histone acetyltransferases (HATs) CREBBP, EP300 and PCAF to the chromatin. This also contributes to the increase in proviral transcription rate, especially when the provirus integrates in transcriptionally silent region of the host genome. To ensure maximal activation of the LTR, Tat mediates nuclear translocation of NF-kappa-B by interacting with host RELA. Through its interaction with host TBP, Tat may also modulate transcription initiation. Tat can reactivate a latently infected cell by penetrating in it and transactivating its LTR promoter. In the cytoplasm, Tat is thought to act as a translational activator of HIV-1 mRNAs. Functionally, extracellular circulating Tat can be endocytosed by surrounding uninfected cells via the binding to several surface receptors such as CD26, CXCR4, heparan sulfate proteoglycans (HSPG) or LDLR. Neurons are rarely infected, but they internalize Tat via their LDLR. Endosomal low pH allows Tat to cross the endosome membrane to enter the cytosol and eventually further translocate into the nucleus, thereby inducing severe cell dysfunctions ranging from cell activation to cell death. Through its interaction with nuclear HATs, Tat is potentially able to control the acetylation-dependent cellular gene expression. Tat seems to inhibit the HAT activity of KAT5/Tip60 and TAF1, and consequently modify the expression of specific cellular genes. Modulates the expression of many cellular genes involved in cell survival, proliferation or in coding for cytokines (such as IL10) or cytokine receptors. May be involved in the derepression of host interleukin IL2 expression. Mediates the activation of cyclin-dependent kinases and dysregulation of microtubule network. Tat plays a role in T-cell and neurons apoptosis. Tat induced neurotoxicity and apoptosis probably contribute to neuroAIDS. Host extracellular matrix metalloproteinase MMP1 cleaves Tat and decreases Tat's mediated neurotoxicity. Circulating Tat also acts as a chemokine-like and/or growth factor-like molecule that binds to specific receptors on the surface of the cells, affecting many cellular pathways. In the vascular system, Tat binds to ITGAV/ITGB3 and ITGA5/ITGB1 integrins dimers at the surface of endothelial cells and competes with bFGF for heparin-binding sites, leading to an excess of soluble bFGF. Binds to KDR/VEGFR-2. All these Tat-mediated effects enhance angiogenesis in Kaposi's sarcoma lesions. The chain is Protein Tat from Homo sapiens (Human).